An 80-amino-acid polypeptide reads, in one-letter code: NADH-ubiquinone oxidoreductase chain 5 (80 aa).

Helical transmembrane passes span 4-24 and 44-64; these read ISFL…LNFM and IVMT…VLLI.

The protein belongs to the complex I subunit 5 family.

It is found in the mitochondrion inner membrane. It catalyses the reaction a ubiquinone + NADH + 5 H(+)(in) = a ubiquinol + NAD(+) + 4 H(+)(out). In terms of biological role, core subunit of the mitochondrial membrane respiratory chain NADH dehydrogenase (Complex I) that is believed to belong to the minimal assembly required for catalysis. Complex I functions in the transfer of electrons from NADH to the respiratory chain. The immediate electron acceptor for the enzyme is believed to be ubiquinone. The sequence is that of NADH-ubiquinone oxidoreductase chain 5 (ND5) from Ceratitis capitata (Mediterranean fruit fly).